Reading from the N-terminus, the 207-residue chain is Ribonuclease HII (207 aa).

The region spanning 18 to 207 (TYLSGSDEAG…PIKKISKETS (190 aa)) is the RNase H type-2 domain. A divalent metal cation-binding residues include Asp24, Glu25, and Asp116.

It belongs to the RNase HII family. Mn(2+) serves as cofactor. The cofactor is Mg(2+).

It localises to the cytoplasm. The enzyme catalyses Endonucleolytic cleavage to 5'-phosphomonoester.. Its function is as follows. Endonuclease that specifically degrades the RNA of RNA-DNA hybrids. The sequence is that of Ribonuclease HII from Mycoplasma mycoides subsp. mycoides SC (strain CCUG 32753 / NCTC 10114 / PG1).